The sequence spans 466 residues: Cysteine--tRNA ligase (466 aa).

Cys-28 provides a ligand contact to Zn(2+). The 'HIGH' region signature appears at 30–40 (PTVYNYIHIGN). 3 residues coordinate Zn(2+): Cys-208, His-233, and Glu-237. The 'KMSKS' region motif lies at 265–269 (KMSKS). An ATP-binding site is contributed by Lys-268.

It belongs to the class-I aminoacyl-tRNA synthetase family. As to quaternary structure, monomer. Zn(2+) serves as cofactor.

The protein localises to the cytoplasm. It carries out the reaction tRNA(Cys) + L-cysteine + ATP = L-cysteinyl-tRNA(Cys) + AMP + diphosphate. The sequence is that of Cysteine--tRNA ligase from Staphylococcus aureus (strain MRSA252).